The primary structure comprises 252 residues: Protein TRANSPARENT TESTA 16 (252 aa).

The 61-residue stretch at 1–61 folds into the MADS-box domain; it reads MGRGKIEIKK…GKLSEFCSEQ (61 aa). The K-box domain maps to 86–176; that stretch reads QEQLHHEMEL…YRWLHEHRAA (91 aa). A coiled-coil region spans residues 121–174; the sequence is NELDGLERQLEHSVLKVRERKNELMQQQLENLSRKRRMLEEDNNNMYRWLHEHR.

Interacts with AP1/AGL7, SEP1/AGL2, SEP2/AGL4, SEP3/AGL9 and AGL3/SEP4. In terms of tissue distribution, expressed in buds, flowers and immature seeds, but not in roots, stems, leaves, seedlings or siliques valves. Expression in seed coat is confined to the endothelium layer.

The protein resides in the nucleus. Transcription factor involved in the developmental regulation of the endothelium and in the accumulation of proanthocyanidins (PAs) or condensed tannins which give the seed its brown pigmentation after oxidation. Necessary for the normal activation of the BANYULS promoter in the endothelium body. Is required, together with AGL11/STK for the maternal control of endothelium formation, which is essential for female gametophyte development and fertilization, and seed formation. Interacts genetically with AGL1/SHP1 and AGL5/SHP2 in a partially antagonistic manner and represses AGL1/SHP1, AGL5/SHP2, and AGL8/FUL during flower development. Is essential for the coordination of cell divisions in ovule, seed coat development and endosperm formation. Mediates the crosstalk between endothelium and nucellus to ensure proper seed formation. Functions redundantly with AGL63/GOA to repress nucellus growth and promote its degeneration. Represses the negative regulator of autophagy and programmed cell death HVA22D in the proximal nucellus. Binds specifically to the CArG box DNA sequence 5'-CC (A/T)6 GG-3'. The protein is Protein TRANSPARENT TESTA 16 (TT16) of Arabidopsis thaliana (Mouse-ear cress).